Reading from the N-terminus, the 294-residue chain is Equatorin (294 aa).

A signal peptide spans 1–14; sequence MNFILFIFIPGVFS. Topologically, residues 15 to 181 are vesicular; that stretch reads LKSSTLKPTI…QPDLEDLKIK (167 aa). N-linked (GlcNAc...) asparagine glycosylation occurs at asparagine 76. The tract at residues 107–126 is disordered; it reads KSTIEEETTTSEPSHKNIQR. N-linked (GlcNAc...) asparagine glycosylation occurs at asparagine 143. The helical transmembrane segment at 182–202 threads the bilayer; the sequence is IMLGISLMTLLLFVVLLAFCS. Topologically, residues 203 to 294 are cytoplasmic; the sequence is ATLYKLRHLS…MHENDESVTR (92 aa).

Interacts with SNAP25. Post-translationally, highly N- and O-glycosylated; contains sialic acid. As to expression, isoform 1 is highly expressed in testis. Isoform 2 is expressed at low levels in skin and blood.

It localises to the cytoplasmic vesicle. It is found in the secretory vesicle. The protein resides in the acrosome membrane. Its subcellular location is the acrosome inner membrane. The protein localises to the acrosome outer membrane. Its function is as follows. Acrosomal membrane-anchored protein involved in the process of fertilization and in acrosome biogenesis. The polypeptide is Equatorin (EQTN) (Homo sapiens (Human)).